The sequence spans 723 residues: Polyribonucleotide nucleotidyltransferase (723 aa).

D488 and D494 together coordinate Mg(2+). One can recognise a KH domain in the interval 555–614; the sequence is PKIITLNIKPEKIKDVIGPGGKQINAIIEETGVKIDIEQDGTVYIASQDQAMNRKAIAII. The 69-residue stretch at 624–692 folds into the S1 motif domain; the sequence is GEVYTGKVRR…HQGRVNLSRK (69 aa). The tract at residues 692–723 is disordered; that stretch reads KALLEKKEQPEGDKKPQAEKKFYPKTKKPESK. A compositionally biased stretch (basic and acidic residues) spans 693-723; it reads ALLEKKEQPEGDKKPQAEKKFYPKTKKPESK.

It belongs to the polyribonucleotide nucleotidyltransferase family. Requires Mg(2+) as cofactor.

The protein resides in the cytoplasm. It catalyses the reaction RNA(n+1) + phosphate = RNA(n) + a ribonucleoside 5'-diphosphate. Functionally, involved in mRNA degradation. Catalyzes the phosphorolysis of single-stranded polyribonucleotides processively in the 3'- to 5'-direction. The chain is Polyribonucleotide nucleotidyltransferase from Listeria innocua serovar 6a (strain ATCC BAA-680 / CLIP 11262).